Here is a 301-residue protein sequence, read N- to C-terminus: Bifunctional protein FolD (301 aa).

Residues 166–168, Ser-191, and Ile-232 each bind NADP(+); that span reads GKS.

Belongs to the tetrahydrofolate dehydrogenase/cyclohydrolase family. As to quaternary structure, homodimer.

The catalysed reaction is (6R)-5,10-methylene-5,6,7,8-tetrahydrofolate + NADP(+) = (6R)-5,10-methenyltetrahydrofolate + NADPH. It catalyses the reaction (6R)-5,10-methenyltetrahydrofolate + H2O = (6R)-10-formyltetrahydrofolate + H(+). The protein operates within one-carbon metabolism; tetrahydrofolate interconversion. In terms of biological role, catalyzes the oxidation of 5,10-methylenetetrahydrofolate to 5,10-methenyltetrahydrofolate and then the hydrolysis of 5,10-methenyltetrahydrofolate to 10-formyltetrahydrofolate. The sequence is that of Bifunctional protein FolD from Orientia tsutsugamushi (strain Ikeda) (Rickettsia tsutsugamushi).